The primary structure comprises 366 residues: tRNA/tmRNA (uracil-C(5))-methyltransferase (366 aa).

S-adenosyl-L-methionine-binding residues include Q190, Y218, N223, E239, and D299. C324 acts as the Nucleophile in catalysis. E358 (proton acceptor) is an active-site residue.

It belongs to the class I-like SAM-binding methyltransferase superfamily. RNA M5U methyltransferase family. TrmA subfamily.

It carries out the reaction uridine(54) in tRNA + S-adenosyl-L-methionine = 5-methyluridine(54) in tRNA + S-adenosyl-L-homocysteine + H(+). The enzyme catalyses uridine(341) in tmRNA + S-adenosyl-L-methionine = 5-methyluridine(341) in tmRNA + S-adenosyl-L-homocysteine + H(+). Its function is as follows. Dual-specificity methyltransferase that catalyzes the formation of 5-methyluridine at position 54 (m5U54) in all tRNAs, and that of position 341 (m5U341) in tmRNA (transfer-mRNA). The sequence is that of tRNA/tmRNA (uracil-C(5))-methyltransferase from Escherichia coli O7:K1 (strain IAI39 / ExPEC).